Consider the following 512-residue polypeptide: NADH-quinone oxidoreductase subunit N 2 (512 aa).

14 consecutive transmembrane segments (helical) span residues 23–43 (AFVP…IDLF), 50–70 (TIIP…VYLQ), 88–108 (FAIF…LISI), 120–140 (SLGE…LMAS), 144–164 (LLMM…LVGY), 179–199 (VIYG…IYGL), 220–240 (ITLM…AGVV), 254–274 (PTPI…AMLI), 295–315 (WVTL…VVAL), 323–343 (LLAY…IVAD), 351–371 (LFYL…IILI), 394–414 (AASL…VGFI), 429–449 (VFVW…YFYF), and 477–497 (LVAF…PLSV).

Belongs to the complex I subunit 2 family. As to quaternary structure, NDH-1 is composed of 14 different subunits. Subunits NuoA, H, J, K, L, M, N constitute the membrane sector of the complex.

Its subcellular location is the cell inner membrane. The catalysed reaction is a quinone + NADH + 5 H(+)(in) = a quinol + NAD(+) + 4 H(+)(out). In terms of biological role, NDH-1 shuttles electrons from NADH, via FMN and iron-sulfur (Fe-S) centers, to quinones in the respiratory chain. The immediate electron acceptor for the enzyme in this species is believed to be a menaquinone. Couples the redox reaction to proton translocation (for every two electrons transferred, four hydrogen ions are translocated across the cytoplasmic membrane), and thus conserves the redox energy in a proton gradient. In Chloroherpeton thalassium (strain ATCC 35110 / GB-78), this protein is NADH-quinone oxidoreductase subunit N 2.